The chain runs to 306 residues: UDP-N-acetylenolpyruvoylglucosamine reductase (306 aa).

The FAD-binding PCMH-type domain occupies 28-194 (KIGNISKLFL…LKTELNLKKE (167 aa)). Residue Ser-223 is the Proton donor of the active site. Residue Glu-295 is part of the active site.

It belongs to the MurB family. FAD serves as cofactor.

The protein localises to the cytoplasm. The catalysed reaction is UDP-N-acetyl-alpha-D-muramate + NADP(+) = UDP-N-acetyl-3-O-(1-carboxyvinyl)-alpha-D-glucosamine + NADPH + H(+). Its pathway is cell wall biogenesis; peptidoglycan biosynthesis. Functionally, cell wall formation. The chain is UDP-N-acetylenolpyruvoylglucosamine reductase from Borrelia garinii subsp. bavariensis (strain ATCC BAA-2496 / DSM 23469 / PBi) (Borreliella bavariensis).